The following is a 469-amino-acid chain: Zinc transporter SLC39A7 (469 aa).

Residues 10–30 (WVAVGLLTWATLGLLVAELGG) traverse the membrane as a helical segment. Basic and acidic residues-rich tracts occupy residues 42-56 (FHGHSHRHSHEDFHH) and 66-114 (HTHE…EHSR). A disordered region spans residues 42–121 (FHGHSHRHSH…HSRGGYGESG (80 aa)). Pros-methylhistidine is present on His66. A run of 3 helical transmembrane segments spans residues 138–158 (ALGATVLISAAPFFVLFLIPV), 169–189 (LQILLSFASGGLLGDAFLHLI), and 214–234 (GPILSVGLWVLSGIVAFLVVE). Residues 242 to 263 (GGHGHSHGHGHAHSHTHGSHGH) are compositionally biased toward basic residues. Residues 242-310 (GGHGHSHGHG…VRPQNAEEEK (69 aa)) form a disordered region. Basic and acidic residues predominate over residues 264 to 285 (GRQECSTKEKQSSEEEEKETRG). 2 positions are modified to phosphoserine: Ser275 and Ser276. Helical transmembrane passes span 386–406 (LTAVGALAGTACALLTEGGAV), 410–430 (IAGGAGPGWVLPFTAGGFIYV), and 448–468 (SLLEVLGLLGGVVMMVLIAHL).

The protein belongs to the ZIP transporter (TC 2.A.5) family. KE4/Catsup subfamily. Homodimer. Post-translationally, methylation at some His residue by METTL9 leads to reduced zinc-binding. Rapidly phosphorylated by CK2 following Zn(2+) treatment. This phosphorylation is required for efficient cytosolic Zn(2+) release.

It localises to the endoplasmic reticulum membrane. It is found in the golgi apparatus. The protein localises to the cis-Golgi network membrane. The enzyme catalyses Zn(2+)(in) = Zn(2+)(out). In terms of biological role, transports Zn(2+) from the endoplasmic reticulum (ER)/Golgi apparatus to the cytosol, playing an essential role in the regulation of cytosolic zinc levels. Acts as a gatekeeper of zinc release from intracellular stores, requiring post-translational activation by phosphorylation, resulting in activation of multiple downstream pathways leading to cell growth and proliferation. Has an essential role in B cell development and is required for proper B cell receptor signaling. Plays an important role in maintaining intestinal epithelial homeostasis and skin dermis development by regulating ER function. Controls cell signaling pathways involved in glucose metabolism in skeletal muscle. Has a protective role against ER stress in different biological contexts. Mediates Zn(2+)-induced ferroptosis. This is Zinc transporter SLC39A7 from Pongo abelii (Sumatran orangutan).